Reading from the N-terminus, the 300-residue chain is Acetylglutamate kinase (300 aa).

Substrate is bound by residues 73–74, Arg-95, and Asn-197; that span reads GG.

It belongs to the acetylglutamate kinase family. ArgB subfamily.

The protein localises to the cytoplasm. It catalyses the reaction N-acetyl-L-glutamate + ATP = N-acetyl-L-glutamyl 5-phosphate + ADP. It participates in amino-acid biosynthesis; L-arginine biosynthesis; N(2)-acetyl-L-ornithine from L-glutamate: step 2/4. In terms of biological role, catalyzes the ATP-dependent phosphorylation of N-acetyl-L-glutamate. The sequence is that of Acetylglutamate kinase from Bordetella petrii (strain ATCC BAA-461 / DSM 12804 / CCUG 43448).